Here is a 283-residue protein sequence, read N- to C-terminus: Bifunctional protein FolD (283 aa).

NADP(+) contacts are provided by residues 164–166 (GRS) and serine 189.

This sequence belongs to the tetrahydrofolate dehydrogenase/cyclohydrolase family. As to quaternary structure, homodimer.

It catalyses the reaction (6R)-5,10-methylene-5,6,7,8-tetrahydrofolate + NADP(+) = (6R)-5,10-methenyltetrahydrofolate + NADPH. The enzyme catalyses (6R)-5,10-methenyltetrahydrofolate + H2O = (6R)-10-formyltetrahydrofolate + H(+). Its pathway is one-carbon metabolism; tetrahydrofolate interconversion. Catalyzes the oxidation of 5,10-methylenetetrahydrofolate to 5,10-methenyltetrahydrofolate and then the hydrolysis of 5,10-methenyltetrahydrofolate to 10-formyltetrahydrofolate. The protein is Bifunctional protein FolD of Lactobacillus acidophilus (strain ATCC 700396 / NCK56 / N2 / NCFM).